A 101-amino-acid chain; its full sequence is MAKLSLINRDIKRAKLADKYAAKRAELKAIIDDQSKTDEERYQARLKLQQLPRNANPTRQRNRCVVTGRPRGVFRKFGLTRHKLREMAMKGEIPGITKASW.

This sequence belongs to the universal ribosomal protein uS14 family. Part of the 30S ribosomal subunit. Contacts proteins S3 and S10.

Its function is as follows. Binds 16S rRNA, required for the assembly of 30S particles and may also be responsible for determining the conformation of the 16S rRNA at the A site. The chain is Small ribosomal subunit protein uS14 from Bordetella petrii (strain ATCC BAA-461 / DSM 12804 / CCUG 43448).